Reading from the N-terminus, the 199-residue chain is Outer-membrane lipoprotein LolB (199 aa).

A signal peptide spans 1–28 (MAAAGSLCQTAWRVRGWLAAGLCALLAG). Cys29 is lipidated: N-palmitoyl cysteine. Residue Cys29 is the site of S-diacylglycerol cysteine attachment.

This sequence belongs to the LolB family. As to quaternary structure, monomer.

The protein localises to the cell outer membrane. In terms of biological role, plays a critical role in the incorporation of lipoproteins in the outer membrane after they are released by the LolA protein. In Bordetella petrii (strain ATCC BAA-461 / DSM 12804 / CCUG 43448), this protein is Outer-membrane lipoprotein LolB.